The following is an 819-amino-acid chain: DNA replication licensing factor Mcm3 (819 aa).

Positions 290–496 (IFELLSKSLA…DVDQMISDHV (207 aa)) constitute an MCM domain. Residues glutamine 348, leucine 388, glutamate 389, alanine 390, and alanine 392 each contribute to the ADP site. The Arginine finger motif lies at 472–475 (SRFD). Serine 522 bears the Phosphoserine mark. Phosphotyrosine is present on tyrosine 538. The segment at 655–717 (DRPSKRRRNS…DAGDLTRRET (63 aa)) is disordered. A phosphoserine mark is found at serine 664, serine 666, serine 680, and serine 682. Threonine 690 and threonine 692 each carry phosphothreonine. Serine 697, serine 735, and serine 739 each carry phosphoserine.

This sequence belongs to the MCM family. Component of the Mcm2-7 complex. The complex forms a toroidal hexameric ring with the proposed subunit order Mcm2-Mcm6-Mcm4-Mcm7-Mcm3-Mcm5.

The protein resides in the nucleus. It is found in the chromosome. The catalysed reaction is ATP + H2O = ADP + phosphate + H(+). Functionally, acts as a component of the Mcm2-7 complex (Mcm complex) (Mcm complex) which is the putative replicative helicase essential for 'once per cell cycle' DNA replication initiation and elongation in eukaryotic cells. Core component of CDC45-MCM-GINS (CMG) helicase, the molecular machine that unwinds template DNA during replication, and around which the replisome is built. The active ATPase sites in the Mcm2-7 ring are formed through the interaction surfaces of two neighboring subunits such that a critical structure of a conserved arginine finger motif is provided in trans relative to the ATP-binding site of the Walker A box of the adjacent subunit. The six ATPase active sites, however, are likely to contribute differentially to the complex helicase activity. This chain is DNA replication licensing factor Mcm3 (Mcm3), found in Drosophila melanogaster (Fruit fly).